A 555-amino-acid polypeptide reads, in one-letter code: MNEADARPTNFIRQIIDEDLATGKHNSVHTRFPPEPNGYLHIGHAKSICLNFGIAQDYQGKCNLRFDDTNPVKEDVEYINSIQKDVQWLGFQWDGNVHYSSDYFDQLYQYAIELINKGLAYVDELSAEEIREYRGTLKEPGKNSPYRSRSVEENLALFEKMRAGGFEEGKACLRAKIDMASPFIVMRDPVLYRIKFAEHHQTGNKWCIYPMYDFTHCISDALENITHSLCTLEFQDNRRLYDWVLDNITIPCHPRQYEFSRLNLEYTVMSKRKLNQLVTENIVDGWDDPRMPTISGLRRRGYTAESIREFCQRIGVTKQDNNVEMASLEACIRDDLNENAPRAMAVIDPVRLVIENMPEGEEILTAPNHPNKPEMGTREVPFSREIYIDRADFKEEANRQYKRLVLGKEVRLRNAYVIKAERVEKDEQGEITTIYCTYDPQTLNKDPADGRKVKGVIHWVSIPHAIPAEIRLYDRLFSVPNPGAEEDFLSTINPESLVIRQGFVEASLKDAAIEKAYQFEREGYFCADKLSTADKLVFNRTVGLRDTWAKISKQG.

Residues 34-44 (PEPNGYLHIGH) carry the 'HIGH' region motif. Residues 35-37 (EPN) and 41-47 (HIGHAKS) contribute to the ATP site. The L-glutamine site is built by Asp-67 and Tyr-212. ATP contacts are provided by residues Thr-231, 261-262 (RL), and 269-271 (MSK). The 'KMSKS' region motif lies at 268-272 (VMSKR).

It belongs to the class-I aminoacyl-tRNA synthetase family. As to quaternary structure, monomer.

It is found in the cytoplasm. It carries out the reaction tRNA(Gln) + L-glutamine + ATP = L-glutaminyl-tRNA(Gln) + AMP + diphosphate. In Proteus mirabilis (strain HI4320), this protein is Glutamine--tRNA ligase.